The sequence spans 380 residues: Crotonobetainyl-CoA reductase (380 aa).

The protein belongs to the acyl-CoA dehydrogenase family. In terms of assembly, homotetramer. Requires FAD as cofactor.

It is found in the cytoplasm. It carries out the reaction 4-(trimethylamino)butanoyl-CoA + oxidized [electron-transfer flavoprotein] + H(+) = crotonobetainyl-CoA + reduced [electron-transfer flavoprotein]. It participates in amine and polyamine metabolism; carnitine metabolism. Functionally, catalyzes the reduction of crotonobetainyl-CoA to gamma-butyrobetainyl-CoA. In Escherichia coli O6:K15:H31 (strain 536 / UPEC), this protein is Crotonobetainyl-CoA reductase.